Consider the following 426-residue polypeptide: Dihydroorotase (426 aa).

Residues histidine 62 and histidine 64 each coordinate Zn(2+). Residues 64 to 66 (HLR) and asparagine 96 each bind substrate. Zn(2+) is bound by residues aspartate 154, histidine 181, histidine 234, and aspartate 307. The active site involves aspartate 307. Residue histidine 311 participates in substrate binding.

This sequence belongs to the metallo-dependent hydrolases superfamily. DHOase family. Class I DHOase subfamily. Zn(2+) is required as a cofactor.

It catalyses the reaction (S)-dihydroorotate + H2O = N-carbamoyl-L-aspartate + H(+). It participates in pyrimidine metabolism; UMP biosynthesis via de novo pathway; (S)-dihydroorotate from bicarbonate: step 3/3. Catalyzes the reversible cyclization of carbamoyl aspartate to dihydroorotate. The polypeptide is Dihydroorotase (Syntrophus aciditrophicus (strain SB)).